The following is a 550-amino-acid chain: Mycosin-2 (550 aa).

A signal peptide spans 1–33 (MASPLNRPGLRAAAASAALTLVALSANVPAAQA). Residues 34–62 (IPPPSVDPAMVPADARPGPDQPMRRSNSC) form a disordered region. The Peptidase S8 domain occupies 79–490 (GFNLVNISKA…YGLVDPVAAL (412 aa)). Active-site charge relay system residues include D103 and H133. The segment covering 168–190 (PPVTAAPAPPVEVPPPMPPPPPV) has biased composition (pro residues). A disordered region spans residues 168–236 (PPVTAAPAPP…PPPPPGAPDG (69 aa)). The active-site Charge relay system is S435. The helical transmembrane segment at 524–544 (NIAIGFVGAVATGVLAMAIGA) threads the bilayer.

It belongs to the peptidase S8 family.

It is found in the cell membrane. The polypeptide is Mycosin-2 (Mycobacterium tuberculosis (strain ATCC 25618 / H37Rv)).